The primary structure comprises 208 residues: MVLAAIFFGGTPILATAMAYPLAICAACVITSIIGTFFVKLGTNNSIMGALYKGLIVTGALSILGLGAATSFTIGWGSIGTVGGIEVRGGNLFVCGLIGLVVTALIVVITEYYTGTNKRPVNSIAQASVTGHGTNVIQGLAVSLESTALPAIVIVGGIIATYQLAGLFGTAIAVTAMLGLAGMIVALDAFGPVTDNAGGIAEMSHLSP.

5 helical membrane passes run 19 to 39 (AYPLAICAACVITSIIGTFFV), 54 to 74 (GLIVTGALSILGLGAATSFTI), 89 to 109 (GGNLFVCGLIGLVVTALIVVI), 140 to 160 (LAVSLESTALPAIVIVGGIIA), and 167 to 187 (LFGTAIAVTAMLGLAGMIVAL).

This sequence belongs to the H(+)-translocating pyrophosphatase (TC 3.A.10) family. As to quaternary structure, homodimer. Requires Mg(2+) as cofactor.

The protein localises to the cell inner membrane. The enzyme catalyses diphosphate + H2O + H(+)(in) = 2 phosphate + 2 H(+)(out). In terms of biological role, proton pump that utilizes the energy of pyrophosphate hydrolysis as the driving force for proton movement across the membrane. Generates a proton motive force. This chain is Pyrophosphate-energized proton pump 2 (hppA2), found in Mycoplana dimorpha.